A 101-amino-acid chain; its full sequence is MATIANPRDIILAPVVSEKSYGLMEQNVYTFFVARDANKTQIKIAVEEIFGVKVASVNTVNREGKRKRSRSGFGVRKATKRAYVTLREGSDSIDIFNGSVA.

Belongs to the universal ribosomal protein uL23 family. In terms of assembly, part of the 50S ribosomal subunit. Contacts protein L29, and trigger factor when it is bound to the ribosome.

Its function is as follows. One of the early assembly proteins it binds 23S rRNA. One of the proteins that surrounds the polypeptide exit tunnel on the outside of the ribosome. Forms the main docking site for trigger factor binding to the ribosome. This is Large ribosomal subunit protein uL23 from Corynebacterium efficiens (strain DSM 44549 / YS-314 / AJ 12310 / JCM 11189 / NBRC 100395).